The primary structure comprises 338 residues: Ketol-acid reductoisomerase (NADP(+)) (338 aa).

Positions 1–181 constitute a KARI N-terminal Rossmann domain; the sequence is MKIYYDKDCN…GGGRAGIIET (181 aa). NADP(+) contacts are provided by residues 24 to 27, arginine 47, serine 50, serine 52, and 82 to 85; these read YGSQ and DETQ. Histidine 107 is an active-site residue. Glycine 133 is an NADP(+) binding site. One can recognise a KARI C-terminal knotted domain in the interval 182–327; that stretch reads SFKEETETDL…ARLRSMMSWI (146 aa). 4 residues coordinate Mg(2+): aspartate 190, glutamate 194, glutamate 226, and glutamate 230. Serine 251 provides a ligand contact to substrate.

Belongs to the ketol-acid reductoisomerase family. The cofactor is Mg(2+).

It carries out the reaction (2R)-2,3-dihydroxy-3-methylbutanoate + NADP(+) = (2S)-2-acetolactate + NADPH + H(+). The enzyme catalyses (2R,3R)-2,3-dihydroxy-3-methylpentanoate + NADP(+) = (S)-2-ethyl-2-hydroxy-3-oxobutanoate + NADPH + H(+). The protein operates within amino-acid biosynthesis; L-isoleucine biosynthesis; L-isoleucine from 2-oxobutanoate: step 2/4. Its pathway is amino-acid biosynthesis; L-valine biosynthesis; L-valine from pyruvate: step 2/4. In terms of biological role, involved in the biosynthesis of branched-chain amino acids (BCAA). Catalyzes an alkyl-migration followed by a ketol-acid reduction of (S)-2-acetolactate (S2AL) to yield (R)-2,3-dihydroxy-isovalerate. In the isomerase reaction, S2AL is rearranged via a Mg-dependent methyl migration to produce 3-hydroxy-3-methyl-2-ketobutyrate (HMKB). In the reductase reaction, this 2-ketoacid undergoes a metal-dependent reduction by NADPH to yield (R)-2,3-dihydroxy-isovalerate. This Geobacter metallireducens (strain ATCC 53774 / DSM 7210 / GS-15) protein is Ketol-acid reductoisomerase (NADP(+)).